A 158-amino-acid polypeptide reads, in one-letter code: Histone H2B.1 (158 aa).

An N6-acetyllysine mark is found at Lys7 and Lys25. Disordered regions lie at residues 26-45 (AAAG…PKKG) and 135-158 (VHNF…GQQT). Residues 135–144 (VHNFESETSK) show a composition bias toward basic and acidic residues. The span at 147-158 (SQGRKRGRGQQT) shows a compositional bias: basic residues.

Belongs to the histone H2B family. As to quaternary structure, the nucleosome is a histone octamer containing two molecules each of H2A, H2B, H3 and H4 assembled in one H3-H4 heterotetramer and two H2A-H2B heterodimers. The octamer wraps approximately 147 bp of DNA. Can be acetylated to form H2BK6ac and H2BK33ac. As to expression, expressed in the generative cell within the bicellular pollen. Not detected in other reproductive or vegetative tissues.

It localises to the nucleus. It is found in the chromosome. Its function is as follows. Core component of nucleosome. Nucleosomes wrap and compact DNA into chromatin, limiting DNA accessibility to the cellular machineries which require DNA as a template. Histones thereby play a central role in transcription regulation, DNA repair, DNA replication and chromosomal stability. DNA accessibility is regulated via a complex set of post-translational modifications of histones, also called histone code, and nucleosome remodeling. This Lilium longiflorum (Trumpet lily) protein is Histone H2B.1.